A 259-amino-acid polypeptide reads, in one-letter code: Hydroxyacylglutathione hydrolase (259 aa).

Residues H56, H58, D60, H61, H112, D133, and H171 each coordinate Zn(2+). The interval 220–243 (NPFLRTGETSVKEKADERSDAQNT) is disordered. Basic and acidic residues predominate over residues 229–239 (SVKEKADERSD).

This sequence belongs to the metallo-beta-lactamase superfamily. Glyoxalase II family. In terms of assembly, monomer. Zn(2+) serves as cofactor.

It catalyses the reaction an S-(2-hydroxyacyl)glutathione + H2O = a 2-hydroxy carboxylate + glutathione + H(+). The protein operates within secondary metabolite metabolism; methylglyoxal degradation; (R)-lactate from methylglyoxal: step 2/2. Functionally, thiolesterase that catalyzes the hydrolysis of S-D-lactoyl-glutathione to form glutathione and D-lactic acid. In Pseudomonas syringae pv. syringae (strain B728a), this protein is Hydroxyacylglutathione hydrolase.